The primary structure comprises 209 residues: MPVLEVLHPLVRHKVGLLRAADISTKKFREITAEIARLLAYEATADFPLEQVTVECWSGPTAVDQIKGKKVTIVPILRAGLGMMDGVLDMIPNAKISVVGLSRNHDTLQPEHYFENLVGSLEERTALIIDPMLATAGSMIATVDLLKRKGCRDIRALVLVAAPEGVKALSAAHPEVRCWTAAIDSHLNEVGYIIPGLGDAGDKIFGTKG.

5-phospho-alpha-D-ribose 1-diphosphate is bound by residues Arg78, Arg103, and 130 to 138 (DPMLATAGS). Residues Ile193 and 198–200 (GDA) each bind uracil. Position 199 (Asp199) interacts with 5-phospho-alpha-D-ribose 1-diphosphate.

Belongs to the UPRTase family. Mg(2+) serves as cofactor.

It catalyses the reaction UMP + diphosphate = 5-phospho-alpha-D-ribose 1-diphosphate + uracil. It functions in the pathway pyrimidine metabolism; UMP biosynthesis via salvage pathway; UMP from uracil: step 1/1. Its activity is regulated as follows. Allosterically activated by GTP. In terms of biological role, catalyzes the conversion of uracil and 5-phospho-alpha-D-ribose 1-diphosphate (PRPP) to UMP and diphosphate. This is Uracil phosphoribosyltransferase from Methylibium petroleiphilum (strain ATCC BAA-1232 / LMG 22953 / PM1).